Here is a 497-residue protein sequence, read N- to C-terminus: 5'-AMP-activated protein kinase subunit gamma-3 (497 aa).

The disordered stretch occupies residues 16 to 143 (STQTPSWSSF…SSSSTDDLDQ (128 aa)). The span at 39–54 (GDSTSWPSPAMTTSAE) shows a compositional bias: polar residues. Basic and acidic residues predominate over residues 68-79 (KSQEDVEERELP). CBS domains follow at residues 204–265 (MATS…RSPL), 287–345 (CFKP…QRTL), and 363–423 (TFRD…HLDI). Residues arginine 232, 247–252 (MLTITD), valine 292, 313–314 (HR), and lysine 332 each bind ADP. Residues arginine 232, 247-252 (MLTITD), valine 292, histidine 313, 313-314 (HR), lysine 332, threonine 363, alanine 368, 389-390 (SA), 405-408 (SRFD), arginine 432, leucine 440, histidine 461, 461-462 (HR), and 477-480 (SLSD) contribute to the AMP site. ATP contacts are provided by residues arginine 232, 247-252 (MLTITD), valine 292, 313-314 (HR), arginine 314, and lysine 332. The short motif at 300–321 (LFEAVYTLIKNRIHRLPVLDPV) is the AMPK pseudosubstrate element. ADP-binding positions include 405–408 (SRFD), arginine 432, leucine 440, and 461–462 (HR). Residues 405–408 (SRFD), arginine 432, leucine 440, and 461–462 (HR) each bind ATP. The CBS 4 domain occupies 435–494 (CLEGVLSCQPHETLGEVIDRIAREQVHRLVLVDETQHLLGVVSLSDILQALVLSPAGIDA).

This sequence belongs to the 5'-AMP-activated protein kinase gamma subunit family. As to quaternary structure, AMPK is a heterotrimer of an alpha catalytic subunit (PRKAA1 or PRKAA2), a beta (PRKAB1 or PRKAB2) and a gamma non-catalytic subunits (PRKAG1, PRKAG2 or PRKAG3). Interacts with FNIP1 and FNIP2. Post-translationally, phosphorylated by ULK1; leading to negatively regulate AMPK activity and suggesting the existence of a regulatory feedback loop between ULK1 and AMPK. In terms of processing, glycosylated; O-GlcNAcylated by OGT, promoting the AMP-activated protein kinase (AMPK) activity.

AMP/ATP-binding subunit of AMP-activated protein kinase (AMPK), an energy sensor protein kinase that plays a key role in regulating cellular energy metabolism. In response to reduction of intracellular ATP levels, AMPK activates energy-producing pathways and inhibits energy-consuming processes: inhibits protein, carbohydrate and lipid biosynthesis, as well as cell growth and proliferation. AMPK acts via direct phosphorylation of metabolic enzymes, and by longer-term effects via phosphorylation of transcription regulators. AMPK also acts as a regulator of cellular polarity by remodeling the actin cytoskeleton; probably by indirectly activating myosin. The AMPK gamma3 subunit is a non-catalytic subunit with a regulatory role in muscle energy metabolism. It mediates binding to AMP, ADP and ATP, leading to AMPK activation or inhibition: AMP-binding results in allosteric activation of alpha catalytic subunit (PRKAA1 or PRKAA2) both by inducing phosphorylation and preventing dephosphorylation of catalytic subunits. ADP also stimulates phosphorylation, without stimulating already phosphorylated catalytic subunit. ATP promotes dephosphorylation of catalytic subunit, rendering the AMPK enzyme inactive. The protein is 5'-AMP-activated protein kinase subunit gamma-3 (PRKAG3) of Bos taurus (Bovine).